The sequence spans 311 residues: MQENQKNTKKEIYNLNKLQKRLRRNVGEAIADFNMIEEGDRIMVCLSGGKDSYTMLEILRNLQQSAPINFSLVAVNLDQKQPGFPEHVLPEYLETLGVEYKIVEENTYGIVKEKIPEGKTTCSLCSRLRRGILYRTATELGATKIALGHHRDDILQTLFLNMFYGGKMKGMPPKLMSDDGKHIVIRPLAYCREKDIQRFADAKAFPIIPCNLCGSQPNLQRQVIADMLRDWDKRYPGRIETMFSAMQNVVPSHLCDTNLFDFKGITHGSEVVNGGDLAFDREEIPLQPSGWQPEEDENQLDELRLNVVEVK.

Residues 47-52 (SGGKDS) carry the PP-loop motif motif. [4Fe-4S] cluster is bound by residues Cys-122, Cys-125, and Cys-213.

It belongs to the TtcA family. In terms of assembly, homodimer. The cofactor is Mg(2+). It depends on [4Fe-4S] cluster as a cofactor.

The protein localises to the cytoplasm. The catalysed reaction is cytidine(32) in tRNA + S-sulfanyl-L-cysteinyl-[cysteine desulfurase] + AH2 + ATP = 2-thiocytidine(32) in tRNA + L-cysteinyl-[cysteine desulfurase] + A + AMP + diphosphate + H(+). Its pathway is tRNA modification. In terms of biological role, catalyzes the ATP-dependent 2-thiolation of cytidine in position 32 of tRNA, to form 2-thiocytidine (s(2)C32). The sulfur atoms are provided by the cysteine/cysteine desulfurase (IscS) system. This is tRNA-cytidine(32) 2-sulfurtransferase from Escherichia coli O1:K1 / APEC.